The sequence spans 129 residues: Lysozyme C, milk isozyme (129 aa).

One can recognise a C-type lysozyme domain in the interval 1 to 129; it reads KIFSKCELAR…LSKYLASCNL (129 aa). Disulfide bonds link Cys-6/Cys-127, Cys-30/Cys-115, Cys-65/Cys-80, and Cys-76/Cys-94. Residues Glu-35 and Asp-53 contribute to the active site. Ca(2+)-binding residues include Lys-82, Asp-85, Asn-87, Asp-90, and Asp-91.

This sequence belongs to the glycosyl hydrolase 22 family. In terms of assembly, monomer. It depends on Ca(2+) as a cofactor.

The enzyme catalyses Hydrolysis of (1-&gt;4)-beta-linkages between N-acetylmuramic acid and N-acetyl-D-glucosamine residues in a peptidoglycan and between N-acetyl-D-glucosamine residues in chitodextrins.. Its function is as follows. Lysozymes have primarily a bacteriolytic function; those in tissues and body fluids are associated with the monocyte-macrophage system and enhance the activity of immunoagents. In Canis lupus familiaris (Dog), this protein is Lysozyme C, milk isozyme.